Reading from the N-terminus, the 220-residue chain is DNA replication complex GINS protein SLD5 (220 aa).

The protein belongs to the GINS4/SLD5 family. Component of the GINS complex. Interacts with EOL1 in the nucleus.

The protein localises to the nucleus. The GINS complex plays an essential role in the initiation of DNA replication. Required during embryogenesis. The chain is DNA replication complex GINS protein SLD5 from Arabidopsis thaliana (Mouse-ear cress).